The sequence spans 475 residues: Dihydrolipoyl dehydrogenase (475 aa).

FAD contacts are provided by residues 37–46, Lys-55, and Ala-118; that span reads EQYYSLGGVC. A disulfide bridge links Cys-46 with Cys-51. NAD(+) is bound by residues 183–187, Asp-206, Val-239, and 272–275; these read GGGII and AIGR. FAD-binding residues include Asp-315 and Ala-323. His-447 serves as the catalytic Proton acceptor.

Belongs to the class-I pyridine nucleotide-disulfide oxidoreductase family. Homodimer. FAD serves as cofactor.

It is found in the cytoplasm. It carries out the reaction N(6)-[(R)-dihydrolipoyl]-L-lysyl-[protein] + NAD(+) = N(6)-[(R)-lipoyl]-L-lysyl-[protein] + NADH + H(+). Lipoamide dehydrogenase is a component of the alpha-ketoacid dehydrogenase complexes. The sequence is that of Dihydrolipoyl dehydrogenase (lpdA) from Buchnera aphidicola subsp. Baizongia pistaciae (strain Bp).